A 347-amino-acid chain; its full sequence is D-alanine--D-alanine ligase (347 aa).

The ATP-grasp domain maps to 138–339; sequence KILCSHAGIP…YSQVIETILA (202 aa). 171–226 contributes to the ATP binding site; it reads SDRFTFPLFVKPVDAGSSFGCTFVDFFEQLPVAIEHALQHGKSAIVEPALDAPEVF. Residues D296, E308, and N310 each contribute to the Mg(2+) site.

Belongs to the D-alanine--D-alanine ligase family. Requires Mg(2+) as cofactor. Mn(2+) serves as cofactor.

Its subcellular location is the cytoplasm. The enzyme catalyses 2 D-alanine + ATP = D-alanyl-D-alanine + ADP + phosphate + H(+). The protein operates within cell wall biogenesis; peptidoglycan biosynthesis. Cell wall formation. In Tropheryma whipplei (strain TW08/27) (Whipple's bacillus), this protein is D-alanine--D-alanine ligase.